The chain runs to 194 residues: ATP-dependent Clp protease proteolytic subunit (194 aa).

Ser97 acts as the Nucleophile in catalysis. The active site involves His122.

It belongs to the peptidase S14 family. Fourteen ClpP subunits assemble into 2 heptameric rings which stack back to back to give a disk-like structure with a central cavity, resembling the structure of eukaryotic proteasomes.

The protein resides in the cytoplasm. The catalysed reaction is Hydrolysis of proteins to small peptides in the presence of ATP and magnesium. alpha-casein is the usual test substrate. In the absence of ATP, only oligopeptides shorter than five residues are hydrolyzed (such as succinyl-Leu-Tyr-|-NHMec, and Leu-Tyr-Leu-|-Tyr-Trp, in which cleavage of the -Tyr-|-Leu- and -Tyr-|-Trp bonds also occurs).. Cleaves peptides in various proteins in a process that requires ATP hydrolysis. Has a chymotrypsin-like activity. Plays a major role in the degradation of misfolded proteins. In Campylobacter jejuni subsp. jejuni serotype O:6 (strain 81116 / NCTC 11828), this protein is ATP-dependent Clp protease proteolytic subunit.